Reading from the N-terminus, the 977-residue chain is Glutamate receptor 2 (977 aa).

The signal sequence occupies residues 1–19 (MNKNLLVFGFLIFVKIGET). Residues 20–621 (SKKFPLRAFV…FSFMEPLGMT (602 aa)) lie on the Extracellular side of the membrane. N-linked (GlcNAc...) asparagine glycans are attached at residues asparagine 36, asparagine 227, asparagine 291, asparagine 427, asparagine 532, and asparagine 566. A helical transmembrane segment spans residues 622-642 (IWIFTLSSYFGVSLTIFLVSW). Over 643-695 (FSPYEKRIEFKRGEFTVTNEFTLYNSLWFTLAAFMQQGTDILPRAVSGRIASS) the chain is Cytoplasmic. Residues 696-716 (CWWFFTLIIVSSYTANLAAFL) traverse the membrane as a helical segment. Residues 717 to 898 (TLERMTPPIE…GTSSSLNLSK (182 aa)) lie on the Extracellular side of the membrane. N-linked (GlcNAc...) asparagine glycans are attached at residues asparagine 783 and asparagine 895. The helical transmembrane segment at 899 to 919 (VAGIFYILLAGMVLSMCTALV) threads the bilayer. Topologically, residues 920 to 977 (EFLFRKNKENREKERNRMRSSRPLKPGILASCERAKQKQLQNRRTKSEEVSTPRSTLF) are cytoplasmic. Positions 954–977 (AKQKQLQNRRTKSEEVSTPRSTLF) are disordered.

It belongs to the glutamate-gated ion channel (TC 1.A.10.1) family. Command interneurons of the locomotory control circuit (AIA, AIB, AVA, AVD, AVE, PVC, RIA, RIG and RIR) and motor neurons (AVG, M1, RMDD and RMDV).

It is found in the membrane. The protein localises to the postsynaptic cell membrane. Functionally, L-glutamate acts as an excitatory neurotransmitter at many synapses in the central nervous system. The postsynaptic actions of glutamate are mediated by a variety of receptors that are named according to their selective agonists. Required for response to mechanical and osmotic stimuli. In Caenorhabditis elegans, this protein is Glutamate receptor 2 (glr-2).